A 105-amino-acid polypeptide reads, in one-letter code: Large ribosomal subunit protein eL36 (105 aa).

K62 is modified (N6-acetyllysine).

The protein belongs to the eukaryotic ribosomal protein eL36 family. As to quaternary structure, component of the large ribosomal subunit.

It localises to the cytoplasm. The protein localises to the cytosol. Its function is as follows. Component of the large ribosomal subunit. The ribosome is a large ribonucleoprotein complex responsible for the synthesis of proteins in the cell. In Homo sapiens (Human), this protein is Large ribosomal subunit protein eL36 (RPL36).